Consider the following 307-residue polypeptide: Manganese-dependent inorganic pyrophosphatase (307 aa).

Mn(2+)-binding residues include H7, D11, D13, D66, H88, and D147.

It depends on Mn(2+) as a cofactor.

It localises to the cytoplasm. The enzyme catalyses diphosphate + H2O = 2 phosphate + H(+). The sequence is that of Manganese-dependent inorganic pyrophosphatase (ppaC) from Methanocaldococcus jannaschii (strain ATCC 43067 / DSM 2661 / JAL-1 / JCM 10045 / NBRC 100440) (Methanococcus jannaschii).